Reading from the N-terminus, the 269-residue chain is 3-methyl-2-oxobutanoate hydroxymethyltransferase (269 aa).

Residues Asp-48 and Asp-87 each contribute to the Mg(2+) site. Residues 48-49 (DS), Asp-87, and Lys-116 each bind 3-methyl-2-oxobutanoate. Glu-118 lines the Mg(2+) pocket. Glu-185 acts as the Proton acceptor in catalysis.

Belongs to the PanB family. As to quaternary structure, homodecamer; pentamer of dimers. It depends on Mg(2+) as a cofactor.

Its subcellular location is the cytoplasm. It catalyses the reaction 3-methyl-2-oxobutanoate + (6R)-5,10-methylene-5,6,7,8-tetrahydrofolate + H2O = 2-dehydropantoate + (6S)-5,6,7,8-tetrahydrofolate. It participates in cofactor biosynthesis; (R)-pantothenate biosynthesis; (R)-pantoate from 3-methyl-2-oxobutanoate: step 1/2. Its function is as follows. Catalyzes the reversible reaction in which hydroxymethyl group from 5,10-methylenetetrahydrofolate is transferred onto alpha-ketoisovalerate to form ketopantoate. This Campylobacter curvus (strain 525.92) protein is 3-methyl-2-oxobutanoate hydroxymethyltransferase.